The following is a 264-amino-acid chain: Type III pantothenate kinase (264 aa).

Asp-6–Glu-13 is an ATP binding site. Gly-109–Arg-112 is a substrate binding site. Asp-111 (proton acceptor) is an active-site residue. K(+) is bound at residue Asp-131. Thr-134 is an ATP binding site. Thr-185 lines the substrate pocket.

This sequence belongs to the type III pantothenate kinase family. As to quaternary structure, homodimer. Requires NH4(+) as cofactor. The cofactor is K(+).

It localises to the cytoplasm. The enzyme catalyses (R)-pantothenate + ATP = (R)-4'-phosphopantothenate + ADP + H(+). It participates in cofactor biosynthesis; coenzyme A biosynthesis; CoA from (R)-pantothenate: step 1/5. Catalyzes the phosphorylation of pantothenate (Pan), the first step in CoA biosynthesis. The polypeptide is Type III pantothenate kinase (Nocardia farcinica (strain IFM 10152)).